Consider the following 636-residue polypeptide: Transcription termination factor FttA (636 aa).

The KHa stretch occupies residues 3 to 70 (SEMLEEIKRT…IIIRSDRSVL (68 aa)). A KHb region spans residues 71–138 (MDPEKAIRKI…WAPKILRTPP (68 aa)). The tract at residues 179 to 383 (WARLTAMGGF…LVMESTYGGH (205 aa)) is metallo-beta-lactamase N-terminus. 6 residues coordinate Zn(2+): histidine 242, histidine 244, aspartate 246, histidine 247, histidine 329, and aspartate 352. The segment at 384–577 (EDVQPSRNRA…MNIKTIEGFS (194 aa)) is beta-Casp. Residues 578–636 (GHSDRRQLMEYVKRISPKPEKILLCHGDNYKTLDLASSIYRTYRIETKTPLNLETVRIQ) are metallo-beta-lactamase C-terminus. Histidine 603 lines the Zn(2+) pocket.

It belongs to the metallo-beta-lactamase superfamily. RNA-metabolizing metallo-beta-lactamase-like family. FttA subfamily. Homodimer. Interacts with RNA polymerase (RNAP), interacts with the Spt4-Spt5 complex. Does not seem to interact with the RNA degrading exosome. It depends on Zn(2+) as a cofactor.

Most active at 0.5 M or 0.7 M NaCl, less active at 1.0 M NaCl. Nuclease activity is inhibited by N,N,Tetrakis-(2-pyridylmethyl)-ethylene diamine (TPEN), a specific chelator of zinc ions. Functionally, terminates transcription on the whole genome. Termination is linked to FttA-mediated RNA cleavage and does not require NTP hydrolysis. Cleaves endonucleolytically at the RNA exit channel of RNA polymerase (RNAP); the 5'-3' exonuclease activity of this protein degrades the nascent RNA released from RNAP. In terms of biological role, an RNA nuclease, it bind single-stranded RNA (ssRNA) with a preference for U-rich sequences. In Methanothermobacter thermautotrophicus (strain ATCC 29096 / DSM 1053 / JCM 10044 / NBRC 100330 / Delta H) (Methanobacterium thermoautotrophicum), this protein is Transcription termination factor FttA.